The sequence spans 679 residues: Protein hook (679 aa).

Positions 6–123 (NEMYYSLLEW…RLLQLVLGCA (118 aa)) constitute a Calponin-homology (CH) domain. Coiled-coil stretches lie at residues 135 to 437 (EIMC…LKCG) and 480 to 574 (QTAL…QEIL).

The protein belongs to the hook family. In terms of assembly, homodimer. Interacts with microtubules via its N-terminus.

It localises to the cytoplasm. The protein resides in the cytoskeleton. The protein localises to the endosome. Its subcellular location is the synapse. Involved in endocytic trafficking by stabilizing organelles of the endocytic pathway. Probably acts as a cytoskeletal linker protein required to tether endosome vesicles to the cytoskeleton. Involved in modulation of endocytosis at stages required for down-regulation of membrane proteins that control synapse size. Not involved in synaptic vesicle recycling. Required in R7 cells for boss endocytosis into multivesicular bodies (MVBs). Has a role in regulating adult longevity. This Drosophila erecta (Fruit fly) protein is Protein hook.